A 254-amino-acid chain; its full sequence is MKLKFWREVAIDIISDFETTIMPFFGNPDGGKLVKISPSGDETKLVDKLAEDLILSRITELGVNVVSEEVGVIDNESEYTVIVDPLDGSYNFIAGIPFFALSLAVFKKDKPIYAIIYEPMTERFFEGIPGEGAFLNGKRIKVRKTPDEKPSISFYSRGKGHEIVKHVKRTRTLGAIALELAYLAMGALDGVVDVRKYVRPTDIAAGTIIAKEAGALIKDSAGKDIDISFNATDRLDVIAVNSEELLKTILSLLE.

Residues Glu-68, Asp-84, Leu-86, and Asp-87 each contribute to the Mg(2+) site. Residues 87–89 (DGS), Arg-171, Ile-176, and Arg-195 each bind substrate. Asp-202 is a Mg(2+) binding site.

Belongs to the inositol monophosphatase superfamily. FBPase class 4 family. As to quaternary structure, homodimer. Requires Mg(2+) as cofactor.

It catalyses the reaction beta-D-fructose 1,6-bisphosphate + H2O = beta-D-fructose 6-phosphate + phosphate. Inhibited by Li(+), ADP, ATP and glucose-6-phosphate. Functionally, catalyzes the conversion of D-fructose 1,6-bisphosphate to D-fructose 6-phosphate. In vitro, also has weak activity with inositol-1-phosphate, glucose-1-phosphate and glycerol-2-phosphate. The polypeptide is Fructose-1,6-bisphosphatase (Pyrococcus furiosus (strain ATCC 43587 / DSM 3638 / JCM 8422 / Vc1)).